Here is a 163-residue protein sequence, read N- to C-terminus: MTSADRRRDAVARIIRARRIGTQEELLAALERAGFRATQATLSRDLARLGARRVSGPEGAVYELGADGADGADGGLAALRGLVSSIAANASMVVIRTHPGSAPAIARAIDLAQPPEVLGTIAGDDTIFVAPAGELRPRRLAARLAELLGTPSALAGEGGDRTH.

This sequence belongs to the ArgR family.

It is found in the cytoplasm. Its pathway is amino-acid biosynthesis; L-arginine biosynthesis [regulation]. Functionally, regulates arginine biosynthesis genes. This chain is Arginine repressor, found in Anaeromyxobacter dehalogenans (strain 2CP-C).